The sequence spans 240 residues: DNA repair protein RecO (240 aa).

This sequence belongs to the RecO family.

Involved in DNA repair and RecF pathway recombination. This Actinobacillus pleuropneumoniae serotype 7 (strain AP76) protein is DNA repair protein RecO.